The primary structure comprises 251 residues: Triosephosphate isomerase (251 aa).

Substrate is bound at residue 9–11 (NWK). The active-site Electrophile is the His95. Catalysis depends on Glu167, which acts as the Proton acceptor. Substrate contacts are provided by residues Gly173, Ser213, and 234 to 235 (GG).

The protein belongs to the triosephosphate isomerase family. In terms of assembly, homodimer.

It localises to the cytoplasm. It catalyses the reaction D-glyceraldehyde 3-phosphate = dihydroxyacetone phosphate. It participates in carbohydrate biosynthesis; gluconeogenesis. The protein operates within carbohydrate degradation; glycolysis; D-glyceraldehyde 3-phosphate from glycerone phosphate: step 1/1. Its function is as follows. Involved in the gluconeogenesis. Catalyzes stereospecifically the conversion of dihydroxyacetone phosphate (DHAP) to D-glyceraldehyde-3-phosphate (G3P). In Citrifermentans bemidjiense (strain ATCC BAA-1014 / DSM 16622 / JCM 12645 / Bem) (Geobacter bemidjiensis), this protein is Triosephosphate isomerase.